The chain runs to 299 residues: HTH-type transcriptional regulator ArgP (299 aa).

Positions 4–60 (PDYRTLQALDAVIRERGFERAAQKLCITQSAVSQRIKQLENMFGQPLLVRTVPPRPT) constitute an HTH lysR-type domain. Residues 21 to 40 (FERAAQKLCITQSAVSQRIK) constitute a DNA-binding region (H-T-H motif).

It belongs to the LysR transcriptional regulatory family. In terms of assembly, homodimer.

Functionally, controls the transcription of genes involved in arginine and lysine metabolism. The polypeptide is HTH-type transcriptional regulator ArgP (Erwinia tasmaniensis (strain DSM 17950 / CFBP 7177 / CIP 109463 / NCPPB 4357 / Et1/99)).